Here is a 255-residue protein sequence, read N- to C-terminus: tRNA pseudouridine synthase A (255 aa).

The Nucleophile role is filled by Asp-53. Tyr-113 contributes to the substrate binding site.

This sequence belongs to the tRNA pseudouridine synthase TruA family. In terms of assembly, homodimer.

It catalyses the reaction uridine(38/39/40) in tRNA = pseudouridine(38/39/40) in tRNA. Its function is as follows. Formation of pseudouridine at positions 38, 39 and 40 in the anticodon stem and loop of transfer RNAs. This is tRNA pseudouridine synthase A from Acidiphilium cryptum (strain JF-5).